Consider the following 612-residue polypeptide: Baculoviral IAP repeat-containing protein 2 (612 aa).

The BIR 1 repeat unit spans residues 46–113 (ELYRMSTYSA…RQFYPSCSFV (68 aa)). Arg-143 carries the omega-N-methylarginine modification. The residue at position 153 (Ser-153) is a Phosphoserine. BIR repeat units lie at residues 177-243 (EEAR…CPFL) and 262-329 (HSAR…CEFL). Zn(2+)-binding residues include Cys-299, Cys-302, His-319, and Cys-326. The CARD domain maps to 447-537 (MASGDLSLIR…TLYENLFVEK (91 aa)). The RING-type zinc-finger motif lies at 565-600 (CKVCMDREVSIVFIPCGHLVVCQECAPSLRKCPICR).

The protein belongs to the IAP family. In terms of assembly, interacts with DIABLO/SMAC and with PRSS25; these interactions inhibit apoptotic suppressor activity. Interacts with CASP9. Interacts (via BIR domains) with TRAF2; the interaction is required for IKBKE ubiquitination. Interacts with E2F1, RIPK1, RIPK2, RIPK3, RIPK4, BIRC5/survivin and USP19. Interacts with HSP90AB1. Interacts with several death receptors, inclusing FAS, TNFRSF10A and TNFRSF10B. Recruited to TNFRSF10B in the absence of receptor stimulation. When TNFRSF10B is stimulated, further recruited to the receptor and cleaved by caspases. Proteolytic fragments remain associated with TNFRSF10B. In terms of processing, auto-ubiquitinated and degraded by the proteasome in apoptotic cells. Post-translationally, upon stimulation of death receptors, including TNFRSF10B, recruited to receptors and cleaved by caspases. Proteolytic fragments remain associated with the receptors. This cleavage presumably inactivates the protein. Expressed in heart, brain, spleen, lung, liver, skeletal muscle, kidney and testis.

Its subcellular location is the cytoplasm. The protein resides in the nucleus. It catalyses the reaction S-ubiquitinyl-[E2 ubiquitin-conjugating enzyme]-L-cysteine + [acceptor protein]-L-lysine = [E2 ubiquitin-conjugating enzyme]-L-cysteine + N(6)-ubiquitinyl-[acceptor protein]-L-lysine.. The CARD domain inhibits the activation of E3 ubiquitin ligase activity by preventing RING domain dimerization and E2 ubiquitin donor binding and activation. The CARD domain-mediated autoinhibition of the E3 ubiquitin-protein ligase activity suppresses cell proliferation and migration. USP19 regulates the stability of BIRC2/c-IAP1 by preventing its ubiquitination. In terms of biological role, multi-functional protein which regulates not only caspases and apoptosis, but also modulates inflammatory signaling and immunity, mitogenic kinase signaling, and cell proliferation, as well as cell invasion and metastasis. Acts as an E3 ubiquitin-protein ligase regulating NF-kappa-B signaling and regulates both canonical and non-canonical NF-kappa-B signaling by acting in opposite directions: acts as a positive regulator of the canonical pathway and suppresses constitutive activation of non-canonical NF-kappa-B signaling. The target proteins for its E3 ubiquitin-protein ligase activity include: RIPK1, RIPK2, RIPK3, RIPK4, CASP3, CASP7, CASP8, TRAF2, DIABLO/SMAC, MAP3K14/NIK, MAP3K5/ASK1, IKBKG/NEMO, IKBKE and MXD1/MAD1. Can also function as an E3 ubiquitin-protein ligase of the NEDD8 conjugation pathway, targeting effector caspases for neddylation and inactivation. Acts as an important regulator of innate immune signaling via regulation of Toll-like receptors (TLRs), Nodlike receptors (NLRs) and RIG-I like receptors (RLRs), collectively referred to as pattern recognition receptors (PRRs). Protects cells from spontaneous formation of the ripoptosome, a large multi-protein complex that has the capability to kill cancer cells in a caspase-dependent and caspase-independent manner. Suppresses ripoptosome formation by ubiquitinating RIPK1 and CASP8. Can stimulate the transcriptional activity of E2F1. Plays a role in the modulation of the cell cycle. This Mus musculus (Mouse) protein is Baculoviral IAP repeat-containing protein 2 (Birc2).